The following is a 450-amino-acid chain: Glucose-6-phosphate isomerase (450 aa).

Threonine 39 carries the post-translational modification Phosphothreonine. Glutamate 291 acts as the Proton donor in catalysis. Active-site residues include histidine 312 and lysine 426.

This sequence belongs to the GPI family.

The protein resides in the cytoplasm. The enzyme catalyses alpha-D-glucose 6-phosphate = beta-D-fructose 6-phosphate. Its pathway is carbohydrate biosynthesis; gluconeogenesis. The protein operates within carbohydrate degradation; glycolysis; D-glyceraldehyde 3-phosphate and glycerone phosphate from D-glucose: step 2/4. Functionally, catalyzes the reversible isomerization of glucose-6-phosphate to fructose-6-phosphate. The protein is Glucose-6-phosphate isomerase of Bacillus anthracis.